A 249-amino-acid chain; its full sequence is U1 small nuclear ribonucleoprotein usp102 (249 aa).

The segment at 1 to 25 is disordered; it reads MDPQTNSHQEVQQPSPKETDSQTPS. The 80-residue stretch at 26–105 folds into the RRM 1 domain; it reads ETLYIRNIEE…KPMMIQYSKS (80 aa). A disordered region spans residues 113-157; it reads RESPEEIETRKKDRKNRREMLKRTSALQPAAPKPTHKKPVPKRNV. The span at 114-134 shows a compositional bias: basic and acidic residues; it reads ESPEEIETRKKDRKNRREMLK. One can recognise an RRM 2 domain in the interval 174–247; the sequence is KVLLLQNIPQ…NQIKVTFARK (74 aa).

This sequence belongs to the RRM U1 A/B'' family. As to quaternary structure, component of the spliceosome where it is associated with snRNP U1.

The protein localises to the nucleus. Its subcellular location is the nucleolus. Functionally, involved in nuclear mRNA splicing. The polypeptide is U1 small nuclear ribonucleoprotein usp102 (Schizosaccharomyces pombe (strain 972 / ATCC 24843) (Fission yeast)).